A 325-amino-acid chain; its full sequence is Beta-ketoacyl-[acyl-carrier-protein] synthase III (325 aa).

Residues Cys119 and His252 contribute to the active site. The tract at residues 253 to 257 is ACP-binding; it reads QANIR. Asn282 is a catalytic residue.

Belongs to the thiolase-like superfamily. FabH family. Homodimer.

It localises to the cytoplasm. It catalyses the reaction malonyl-[ACP] + acetyl-CoA + H(+) = 3-oxobutanoyl-[ACP] + CO2 + CoA. It participates in lipid metabolism; fatty acid biosynthesis. Functionally, catalyzes the condensation reaction of fatty acid synthesis by the addition to an acyl acceptor of two carbons from malonyl-ACP. Catalyzes the first condensation reaction which initiates fatty acid synthesis and may therefore play a role in governing the total rate of fatty acid production. Possesses both acetoacetyl-ACP synthase and acetyl transacylase activities. Its substrate specificity determines the biosynthesis of branched-chain and/or straight-chain of fatty acids. This Verminephrobacter eiseniae (strain EF01-2) protein is Beta-ketoacyl-[acyl-carrier-protein] synthase III.